Consider the following 133-residue polypeptide: ATP synthase epsilon chain (133 aa).

Belongs to the ATPase epsilon chain family. In terms of assembly, F-type ATPases have 2 components, CF(1) - the catalytic core - and CF(0) - the membrane proton channel. CF(1) has five subunits: alpha(3), beta(3), gamma(1), delta(1), epsilon(1). CF(0) has three main subunits: a, b and c.

Its subcellular location is the cell inner membrane. In terms of biological role, produces ATP from ADP in the presence of a proton gradient across the membrane. In Maricaulis maris (strain MCS10) (Caulobacter maris), this protein is ATP synthase epsilon chain.